Reading from the N-terminus, the 827-residue chain is Beta-galactosidase 1 (827 aa).

An N-terminal signal peptide occupies residues 1-25; that stretch reads MMGRRGSSWCRWWVALLVLAVAADA. Glutamate 187 functions as the Proton donor in the catalytic mechanism. N-linked (GlcNAc...) asparagine glycosylation is found at asparagine 198 and asparagine 249. The Nucleophile role is filled by glutamate 259. Asparagine 260, asparagine 366, asparagine 392, asparagine 502, asparagine 520, asparagine 578, asparagine 586, and asparagine 615 each carry an N-linked (GlcNAc...) asparagine glycan. The SUEL-type lectin domain maps to 746 to 827; that stretch reads GEAGDAVTLS…SGVLTVQATC (82 aa).

Belongs to the glycosyl hydrolase 35 family.

It is found in the secreted. The protein localises to the extracellular space. The protein resides in the apoplast. The enzyme catalyses Hydrolysis of terminal non-reducing beta-D-galactose residues in beta-D-galactosides.. The chain is Beta-galactosidase 1 from Oryza sativa subsp. japonica (Rice).